Consider the following 1369-residue polypeptide: DNA-directed RNA polymerase subunit beta' (1369 aa).

A disordered region spans residues 1–26 (MTSSSPKTRKSSTKSKAKRGSKSKKA). Positions 7 to 24 (KTRKSSTKSKAKRGSKSK) are enriched in basic residues. Zn(2+)-binding residues include Cys-253, Cys-320, Cys-327, and Cys-330. A disordered region spans residues 1294 to 1369 (TVDMPSSPVA…LQEEGLLSDE (76 aa)). The segment covering 1342–1351 (DDELSAEDQM) has biased composition (acidic residues). Residues 1357-1369 (LEGLQEEGLLSDE) are compositionally biased toward low complexity.

This sequence belongs to the RNA polymerase beta' chain family. RpoC2 subfamily. As to quaternary structure, in cyanobacteria the RNAP catalytic core is composed of 2 alpha, 1 beta, 1 beta', 1 gamma and 1 omega subunit. When a sigma factor is associated with the core the holoenzyme is formed, which can initiate transcription. Requires Zn(2+) as cofactor.

The catalysed reaction is RNA(n) + a ribonucleoside 5'-triphosphate = RNA(n+1) + diphosphate. Its function is as follows. DNA-dependent RNA polymerase catalyzes the transcription of DNA into RNA using the four ribonucleoside triphosphates as substrates. The chain is DNA-directed RNA polymerase subunit beta' from Prochlorococcus marinus (strain NATL2A).